The primary structure comprises 76 residues: Exodeoxyribonuclease 7 small subunit (76 aa).

The protein belongs to the XseB family. As to quaternary structure, heterooligomer composed of large and small subunits.

It is found in the cytoplasm. It catalyses the reaction Exonucleolytic cleavage in either 5'- to 3'- or 3'- to 5'-direction to yield nucleoside 5'-phosphates.. Bidirectionally degrades single-stranded DNA into large acid-insoluble oligonucleotides, which are then degraded further into small acid-soluble oligonucleotides. This is Exodeoxyribonuclease 7 small subunit from Legionella pneumophila (strain Paris).